A 320-amino-acid chain; its full sequence is Nucleotide-binding protein Pcryo_0127 (320 aa).

32-39 (GRSGSGKT) is an ATP binding site. GTP is bound at residue 82 to 85 (DIRT).

The protein belongs to the RapZ-like family.

In terms of biological role, displays ATPase and GTPase activities. The protein is Nucleotide-binding protein Pcryo_0127 of Psychrobacter cryohalolentis (strain ATCC BAA-1226 / DSM 17306 / VKM B-2378 / K5).